The sequence spans 263 residues: Tryptophan synthase alpha chain (263 aa).

Residues E41 and D52 each act as proton acceptor in the active site.

This sequence belongs to the TrpA family. In terms of assembly, tetramer of two alpha and two beta chains.

The enzyme catalyses (1S,2R)-1-C-(indol-3-yl)glycerol 3-phosphate + L-serine = D-glyceraldehyde 3-phosphate + L-tryptophan + H2O. It participates in amino-acid biosynthesis; L-tryptophan biosynthesis; L-tryptophan from chorismate: step 5/5. Functionally, the alpha subunit is responsible for the aldol cleavage of indoleglycerol phosphate to indole and glyceraldehyde 3-phosphate. This Geobacillus sp. (strain WCH70) protein is Tryptophan synthase alpha chain.